The primary structure comprises 207 residues: Peptidyl-tRNA hydrolase (207 aa).

Residue Y17 coordinates tRNA. The active-site Proton acceptor is H22. TRNA-binding residues include F68, N70, and N116.

It belongs to the PTH family. Monomer.

It is found in the cytoplasm. The enzyme catalyses an N-acyl-L-alpha-aminoacyl-tRNA + H2O = an N-acyl-L-amino acid + a tRNA + H(+). Its function is as follows. Hydrolyzes ribosome-free peptidyl-tRNAs (with 1 or more amino acids incorporated), which drop off the ribosome during protein synthesis, or as a result of ribosome stalling. Catalyzes the release of premature peptidyl moieties from peptidyl-tRNA molecules trapped in stalled 50S ribosomal subunits, and thus maintains levels of free tRNAs and 50S ribosomes. This chain is Peptidyl-tRNA hydrolase, found in Buchnera aphidicola subsp. Baizongia pistaciae (strain Bp).